The following is a 186-amino-acid chain: Imidazoleglycerol-phosphate dehydratase (186 aa).

It belongs to the imidazoleglycerol-phosphate dehydratase family.

It is found in the cytoplasm. The enzyme catalyses D-erythro-1-(imidazol-4-yl)glycerol 3-phosphate = 3-(imidazol-4-yl)-2-oxopropyl phosphate + H2O. It participates in amino-acid biosynthesis; L-histidine biosynthesis; L-histidine from 5-phospho-alpha-D-ribose 1-diphosphate: step 6/9. The polypeptide is Imidazoleglycerol-phosphate dehydratase (Dictyoglomus turgidum (strain DSM 6724 / Z-1310)).